A 276-amino-acid polypeptide reads, in one-letter code: MGGYITMETLNSINIPKRKEDSHKGDYGKILLIGGSANLGGAIMLAARACVFSGSGLITVATHPTNHSALHSRCPEAMVIDINDTKMLTKMIEMTDSILIGPGLGVDFKGNNAITFLLQNIQPHQNLIVDGDAITIFSKLKPQLPTCRVIFTPHLKEWERLSGIPIEEQTYERNREAVDRLGATVVLKKHGTEIFFKDEDFKLTIGSPAMATGGMGDTLAGMITSFVGQFDNLKEAVMSATYTHSFIGENLAKDMYVVPPSRLINEIPYAMKQLES.

Residues M7 to L274 form the YjeF C-terminal domain. The (6S)-NADPHX site is built by A42, G105, and H154. An AMP-binding site is contributed by G216. D217 lines the (6S)-NADPHX pocket.

The protein belongs to the NnrD/CARKD family. As to quaternary structure, homotetramer. Mg(2+) is required as a cofactor.

It carries out the reaction (6S)-NADHX + ADP = AMP + phosphate + NADH + H(+). It catalyses the reaction (6S)-NADPHX + ADP = AMP + phosphate + NADPH + H(+). In terms of biological role, catalyzes the dehydration of the S-form of NAD(P)HX at the expense of ADP, which is converted to AMP. Together with NAD(P)HX epimerase, which catalyzes the epimerization of the S- and R-forms, the enzyme allows the repair of both epimers of NAD(P)HX, a damaged form of NAD(P)H that is a result of enzymatic or heat-dependent hydration. This Staphylococcus aureus (strain NCTC 8325 / PS 47) protein is ADP-dependent (S)-NAD(P)H-hydrate dehydratase.